The chain runs to 285 residues: N(G),N(G)-dimethylarginine dimethylaminohydrolase 1 (285 aa).

Alanine 2 bears the N-acetylalanine mark. Residue leucine 30 participates in substrate binding. Serine 33 is modified (phosphoserine). Residues aspartate 73, glutamate 78, aspartate 79, arginine 98, and arginine 145 each coordinate substrate. Residue histidine 173 is the Proton donor of the active site. Cysteine 222 is subject to S-nitrosocysteine. Valine 268 contributes to the substrate binding site. Cysteine 274 is modified (S-nitrosocysteine). Residue cysteine 274 is the Nucleophile of the active site. Cysteine 274 provides a ligand contact to Zn(2+).

The protein belongs to the DDAH family. Monomer. Detected in red blood cells (at protein level). Widely distributed, high amounts found in kidney, brain, aorta and pancreas.

It carries out the reaction N(omega),N(omega)-dimethyl-L-arginine + H2O = dimethylamine + L-citrulline. The enzyme catalyses N(omega)-methyl-L-arginine + H2O = L-citrulline + methylamine. Its activity is regulated as follows. Inhibited by zinc ions. Functionally, hydrolyzes N(G),N(G)-dimethyl-L-arginine (ADMA) and N(G)-monomethyl-L-arginine (MMA) which act as inhibitors of NOS. Has therefore a role in the regulation of nitric oxide generation. The sequence is that of N(G),N(G)-dimethylarginine dimethylaminohydrolase 1 (Ddah1) from Rattus norvegicus (Rat).